Here is a 153-residue protein sequence, read N- to C-terminus: Profilin (153 aa).

Belongs to the profilin family. As to quaternary structure, occurs in many kinds of cells as a complex with monomeric actin in a 1:1 ratio.

The protein localises to the cytoplasm. It localises to the cytoskeleton. Functionally, binds to actin and affects the structure of the cytoskeleton. At high concentrations, profilin prevents the polymerization of actin, whereas it enhances it at low concentrations. By binding to PIP2, it inhibits the formation of IP3 and DG. The protein is Profilin of Tetrahymena pyriformis.